The chain runs to 313 residues: Cytochrome c biogenesis protein CcsA (313 aa).

Helical transmembrane passes span 9 to 29 (ILTH…LITF), 44 to 64 (GIIV…VSSG), 71 to 91 (LYES…IPYF), 111 to 131 (GFAT…VPAL), 143 to 163 (MILG…LLVI), 217 to 237 (VISL…VWAN), 244 to 264 (WNWD…AIYL), and 278 to 298 (AIVA…VNLL).

Belongs to the CcmF/CycK/Ccl1/NrfE/CcsA family. As to quaternary structure, may interact with Ccs1.

Its subcellular location is the plastid. It localises to the chloroplast thylakoid membrane. Functionally, required during biogenesis of c-type cytochromes (cytochrome c6 and cytochrome f) at the step of heme attachment. This chain is Cytochrome c biogenesis protein CcsA, found in Solanum lycopersicum (Tomato).